Consider the following 182-residue polypeptide: Endoribonuclease YbeY (182 aa).

Zn(2+)-binding residues include His-120, His-124, and His-130. Residues 157 to 182 (RGVSFAPKPTGAGAFPSAADRDDTQN) form a disordered region.

Belongs to the endoribonuclease YbeY family. It depends on Zn(2+) as a cofactor.

It localises to the cytoplasm. Single strand-specific metallo-endoribonuclease involved in late-stage 70S ribosome quality control and in maturation of the 3' terminus of the 16S rRNA. In Corynebacterium jeikeium (strain K411), this protein is Endoribonuclease YbeY.